The following is a 272-amino-acid chain: NH(3)-dependent NAD(+) synthetase (272 aa).

45 to 52 (GISGGQDS) is an ATP binding site. Asp51 is a binding site for Mg(2+). A deamido-NAD(+)-binding site is contributed by Arg138. Position 158 (Thr158) interacts with ATP. Glu163 contributes to the Mg(2+) binding site. Lys171 and Asp178 together coordinate deamido-NAD(+). ATP contacts are provided by Lys187 and Thr209. 258–259 (HK) serves as a coordination point for deamido-NAD(+).

It belongs to the NAD synthetase family. In terms of assembly, homodimer.

The enzyme catalyses deamido-NAD(+) + NH4(+) + ATP = AMP + diphosphate + NAD(+) + H(+). The protein operates within cofactor biosynthesis; NAD(+) biosynthesis; NAD(+) from deamido-NAD(+) (ammonia route): step 1/1. Its function is as follows. Catalyzes the ATP-dependent amidation of deamido-NAD to form NAD. Uses ammonia as a nitrogen source. The protein is NH(3)-dependent NAD(+) synthetase of Bacillus cereus (strain ATCC 14579 / DSM 31 / CCUG 7414 / JCM 2152 / NBRC 15305 / NCIMB 9373 / NCTC 2599 / NRRL B-3711).